Here is a 343-residue protein sequence, read N- to C-terminus: Cysteine proteinase 1 (343 aa).

An N-terminal signal peptide occupies residues 1–18; it reads MKVILLFVLAVFTVFVSS. Residues 19–117 constitute a propeptide, activation peptide; the sequence is RGIPLEEQSQ…DYLDDEFINS (99 aa). 3 cysteine pairs are disulfide-bonded: Cys139/Cys190, Cys173/Cys224, and Cys279/Cys332. Cys142 is an active-site residue. Catalysis depends on residues His286 and Asn311.

The protein belongs to the peptidase C1 family. In terms of processing, phosphoglycosylated, contains GlcNAc-alpha-1-P-Ser residues.

The protein resides in the lysosome. Functionally, cysteine proteinases 1 and 2 are believed to participate in the breakdown of protein during differentiation of Dictyostelium as a response to starvation. The protein is Cysteine proteinase 1 (cprA) of Dictyostelium discoideum (Social amoeba).